Here is a 668-residue protein sequence, read N- to C-terminus: Tyrosine-protein phosphatase non-receptor type ptp-2 (668 aa).

2 SH2 domains span residues 10–113 and 134–232; these read NFYY…KKPV and WWHG…EEPL. A Tyrosine-protein phosphatase domain is found at 264 to 580; sequence ISEEFDRLSQ…QFLYKALAFY (317 aa). The active-site Phosphocysteine intermediate is the cysteine 518. Residues 603–668 are disordered; sequence PRRLRPTPNA…SSTLLKSTKK (66 aa). Composition is skewed to low complexity over residues 616–634 and 652–668; these read SSARQVTSSRPSSSASSRT and STSSTSSSSTLLKSTKK.

It belongs to the protein-tyrosine phosphatase family. Non-receptor class 2 subfamily. In terms of tissue distribution, expressed in embryonic cells, developing vulva, body wall muscles, head neurons and gonadal sheath cells.

It is found in the cytoplasm. It catalyses the reaction O-phospho-L-tyrosyl-[protein] + H2O = L-tyrosyl-[protein] + phosphate. Involved in embryonic and larval development. Plays a role in oogenesis by regulating mpk-1 phosphorylation and oocyte maturation in response to major sperm protein (MSP). During the formation of neuromuscular junctions at the larval stage, negatively regulates membrane protrusion from body wall muscles probably downstream of receptor egl-15. Plays a role in fluid homeostasis probably downstream of receptor egl-15 and adapter soc-1. Promotes vulva induction and negatively regulates fertility probably downstream of receptor let-23. Negatively regulates daf-2-mediated repression of dauer formation. The polypeptide is Tyrosine-protein phosphatase non-receptor type ptp-2 (Caenorhabditis elegans).